The chain runs to 445 residues: Methionine aminopeptidase 2-1 (445 aa).

The segment at 1-99 is disordered; that stretch reads MAAQVPTEAL…FPNKAYPKGE (99 aa). Basic residues predominate over residues 61–75; the sequence is KKKKKRKPKKKKKHP. Residue H198 participates in substrate binding. Residues D218, D229, and H298 each contribute to the a divalent metal cation site. H306 contacts substrate. A divalent metal cation is bound by residues E331 and E426.

The protein belongs to the peptidase M24A family. Methionine aminopeptidase eukaryotic type 2 subfamily. Co(2+) serves as cofactor. Requires Zn(2+) as cofactor. It depends on Mn(2+) as a cofactor. The cofactor is Fe(2+).

It is found in the cytoplasm. The catalysed reaction is Release of N-terminal amino acids, preferentially methionine, from peptides and arylamides.. Cotranslationally removes the N-terminal methionine from nascent proteins. The N-terminal methionine is often cleaved when the second residue in the primary sequence is small and uncharged (Met-Ala-, Cys, Gly, Pro, Ser, Thr, or Val). This Fusarium vanettenii (strain ATCC MYA-4622 / CBS 123669 / FGSC 9596 / NRRL 45880 / 77-13-4) (Fusarium solani subsp. pisi) protein is Methionine aminopeptidase 2-1.